Here is a 217-residue protein sequence, read N- to C-terminus: Cyclin-P2-1 (217 aa).

Belongs to the cyclin family. Cyclin U/P subfamily.

This chain is Cyclin-P2-1 (CYCP2-1), found in Oryza sativa subsp. japonica (Rice).